We begin with the raw amino-acid sequence, 41 residues long: Large ribosomal subunit protein bL36 (41 aa).

The protein belongs to the bacterial ribosomal protein bL36 family.

In Nitrobacter winogradskyi (strain ATCC 25391 / DSM 10237 / CIP 104748 / NCIMB 11846 / Nb-255), this protein is Large ribosomal subunit protein bL36.